Here is a 745-residue protein sequence, read N- to C-terminus: Junction plakoglobin (745 aa).

The residue at position 1 (M1) is an N-acetylmethionine. A glycan (O-linked (GlcNAc) threonine) is linked at T14. Residues S99 and S125 each carry the phosphoserine modification. ARM repeat units follow at residues 132–171 (NYQDDAELATRALPELTKLLNDEDPVVVTKAAMIVNQLSK), 172–215 (KEAS…LSHH), 216–255 (REGLLAIFKSGGIPALVRMLSSPVESVLFYAITTLHNLLL), 258–297 (EGAKMAVRLADGLQKMVPLLNKNNPKFLAITTDCLQLLAY), 298–341 (GNQE…LSVC), 342–381 (PSNKPAIVEAGGMQALGKHLTSNSPRLVQNCLWTLRNLSD), 383–420 (ATKQEGLESVLKILVNQLSVDDVNVLTCATGTLSNLTC), 423–464 (SKNK…HLTS), 470–510 (EMAQ…NLAL), 512–551 (PANHAPLQEAAVIPRLVQLLVKAHQDAQRHVAAGTQQPYT), 574–613 (PMNRMEIFRLNTIPLFVQLLYSSVENIQRVAAGVLCELAQ), and 615–661 (KEAA…PDYR). Residues 132 to 297 (NYQDDAELAT…TTDCLQLLAY (166 aa)) are interaction with DSC1 and DSG1. S182 carries the post-translational modification Phosphoserine. Residues 574–661 (PMNRMEIFRL…ISEDKNPDYR (88 aa)) form an interaction with DSC1 region. Phosphoserine occurs at positions 665 and 730.

Belongs to the beta-catenin family. Homodimer. Component of an E-cadherin/catenin adhesion complex composed of at least E-cadherin/CDH1 and gamma-catenin/JUP, and possibly alpha-catenin/CTNNA1; the complex is located to adherens junctions. The stable association of CTNNA1 is controversial as CTNNA1 was shown not to bind to F-actin when assembled in the complex. Interacts with MUC1. Interacts with CAV1. Interacts with PTPRJ. Interacts with DSG1. Interacts with DSC1 and DSC2. Interacts with PKP2. Interacts with PKP3 (via N-terminus); the interaction is required for PKP3 localization to desmosome cell-cell junctions. Interacts with DSG4. Post-translationally, may be phosphorylated by FER. Expressed in the mammary epithelium (at protein level).

The protein resides in the cell junction. The protein localises to the adherens junction. It localises to the desmosome. Its subcellular location is the cytoplasm. It is found in the cytoskeleton. The protein resides in the cell membrane. The protein localises to the nucleus. Functionally, common junctional plaque protein. The membrane-associated plaques are architectural elements in an important strategic position to influence the arrangement and function of both the cytoskeleton and the cells within the tissue. The presence of plakoglobin in both the desmosomes and in the intermediate junctions suggests that it plays a central role in the structure and function of submembranous plaques. Acts as a substrate for VE-PTP and is required by it to stimulate VE-cadherin function in endothelial cells. Can replace beta-catenin in E-cadherin/catenin adhesion complexes which are proposed to couple cadherins to the actin cytoskeleton. This is Junction plakoglobin from Mus musculus (Mouse).